We begin with the raw amino-acid sequence, 871 residues long: CRISPR system Cmr subunit Cmr2 (871 aa).

Residues 1–215 form a not required for target RNA cleavage region; sequence MVNIKEKLFV…THLDLTSALS (215 aa). Mn(2+) contacts are provided by H13, D14, and H25. Zn(2+)-binding residues include C448, C451, C478, and C481. The region spanning 592 to 752 is the GGDEF domain; sequence KYYAILVMDG…GKDTLAIGLL (161 aa). The Mn(2+) site is built by D600, E656, D673, D674, E694, and E700.

This sequence belongs to the CRISPR system Cmr2 family. In terms of assembly, part of the type III-B Cmr ribonucleoprotein (RNP) complex, an elongated RNP with Cmr2 and Cmr3 as the base, with Cmr4 and Cmr5 forming a helical core along the mature crRNA (39 or 45 nt in length), while the complex is capped by Cmr6 and Cmr1. The 5' end of the crRNA is bound to Cmr2 and Cmr3, while Cmr6 and a Cmr1 subunit (Cmr1-1 or Cmr1-2) cap the 3' end of the crRNA. The target RNA lies antiparallel to the crRNA, with its 5' end near Cmr1 and Cmr6 and its 3' end near Cmr2 and Cmr3; major target cleavage occurs nears the junction of Cmr1/Cmr6 and Cmr4/Cmr, with minor cleavage occurring at 6 nt intervals which coincide with the proposed spacing of Cmr4 subunits. Forms a 1:1 complex with Cmr3. The Cmr2-Cmr3 complex non-specifically binds ss-target RNA and crRNA. Interacts with Cmr3, Cmr4 and Cmr5. Requires Ca(2+) as cofactor. Mn(2+) is required as a cofactor. It depends on Zn(2+) as a cofactor.

It is found in the cytoplasm. CRISPR (clustered regularly interspaced short palindromic repeat), is an adaptive immune system that provides protection against mobile genetic elements (viruses, transposable elements and conjugative plasmids). CRISPR clusters contain sequences complementary to antecedent mobile elements and target invading nucleic acids. CRISPR clusters are transcribed and processed into CRISPR RNA (crRNA), formerly called psiRNA (prokaryotic silencing) in this organism. Part of the Cmr ribonucleoprotein complex which has divalent cation-dependent endoribonuclease activity specific for ssRNA complementary to the crRNA (target RNA), generating 5' hydroxy- and 3' phosphate or 2'-3' cyclic phosphate termini. Cmr4 is probably the subunit that cleaves target RNA. Cmr complex does not cleave ssDNA complementary to the crRNA. Cleavage of target RNA is guided by the crRNA; substrate cleavage occurs a fixed distance (14 nt) from the 3' end of the crRNA. In vitro reconstitution shows Cmr1-2 and Cmr5 are not absolutely necessary for target cleavage. The chain is CRISPR system Cmr subunit Cmr2 from Pyrococcus furiosus (strain ATCC 43587 / DSM 3638 / JCM 8422 / Vc1).